The following is a 239-amino-acid chain: THAP domain-containing protein 3 (239 aa).

The THAP-type zinc-finger motif lies at 1–82 (MPKSCAARQC…LKHNAVPTVF (82 aa)). Disordered regions lie at residues 88 to 125 (PQLVRENTDPTGRSGDATSGERKVLPETGSGECGLGRK) and 139 to 174 (VGGLGAQVPPHTPETSGVPGQPASPPELKRRLPTQP). Positions 176–179 (DHSY) match the HCFC1-binding motif (HBM) motif.

As to quaternary structure, component of a THAP1/THAP3-HCFC1-OGT complex that contains at least, either THAP1 or THAP3, HCFC1 and OGT. Interacts directly with OGT and HCFC1 (via its HBM).

Component of a THAP1/THAP3-HCFC1-OGT complex that is required for the regulation of the transcriptional activity of RRM1. The sequence is that of THAP domain-containing protein 3 (THAP3) from Bos taurus (Bovine).